The sequence spans 35 residues: Photosystem II reaction center protein T (35 aa).

The helical transmembrane segment at Ala-3 to Phe-23 threads the bilayer.

It belongs to the PsbT family. As to quaternary structure, PSII is composed of 1 copy each of membrane proteins PsbA, PsbB, PsbC, PsbD, PsbE, PsbF, PsbH, PsbI, PsbJ, PsbK, PsbL, PsbM, PsbT, PsbY, PsbZ, Psb30/Ycf12, at least 3 peripheral proteins of the oxygen-evolving complex and a large number of cofactors. It forms dimeric complexes.

The protein resides in the plastid. It is found in the chloroplast thylakoid membrane. In terms of biological role, found at the monomer-monomer interface of the photosystem II (PS II) dimer, plays a role in assembly and dimerization of PSII. PSII is a light-driven water plastoquinone oxidoreductase, using light energy to abstract electrons from H(2)O, generating a proton gradient subsequently used for ATP formation. In Stewartia pseudocamellia (Japanese stewartia), this protein is Photosystem II reaction center protein T.